We begin with the raw amino-acid sequence, 487 residues long: MQSTKKAIEITESNFAAATTGYDAVDDLLHYHERGNGIQINGKDSFSNEQAGLFITRENQTWNGYKVFGQPVKLTFSFPDYKFSSTNVAGDTGLSKFSAEQQQQAKLSLQSWADVANITFTEVAAGQKANITFGNYSQDRPGHYDYGTQAYAFLPNTIWQGQDLGGQTWYNVNQSNVKHPATEDYGRQTFTHEIGHALGLSHPGDYNAGEGNPTYRDVTYAEDTRQFSLMSYWSETNTGGDNGGHYAAAPLLDDIAAIQHLYGANLSTRTGDTVYGFNSNTGRDFLSTTSNSQKVIFAAWDAGGNDTFDFSGYTANQRINLNEKSFSDVGGLKGNVSIAAGVTIENAIGGSGNDVIVGNAANNVLKGGAGNDVLFGGGGADELWGGAGKDIFVFSAASDSAPGASDWIRDFQKGIDKIDLSFFNKEAQSSDFIHFVDHFSGAAGEALLSYNASNNVTDLSVNIGGHQAPDFLVKIVGQVDVATDFIV.

Positions 1–16 (MQSTKKAIEITESNFA) are excised as a propeptide. Histidine 192 lines the Zn(2+) pocket. Glutamate 193 is a catalytic residue. The Zn(2+) site is built by histidine 196, histidine 202, and tyrosine 232. 32 residues coordinate Ca(2+): arginine 269, glycine 271, threonine 273, aspartate 301, glycine 303, glycine 304, aspartate 306, threonine 343, glutamate 345, glycine 350, glycine 352, aspartate 354, asparagine 359, alanine 361, asparagine 363, glycine 367, glycine 368, alanine 369, aspartate 372, glycine 376, glycine 377, glycine 378, glycine 379, aspartate 381, glycine 385, glycine 386, alanine 387, glycine 388, aspartate 390, aspartate 399, aspartate 406, and aspartate 416. Hemolysin-type calcium-binding repeat units lie at residues 348 to 365 (IGGS…NNVL) and 366 to 383 (KGGA…ADEL).

It belongs to the peptidase M10B family. It depends on Ca(2+) as a cofactor. The cofactor is Zn(2+).

Its subcellular location is the secreted. The enzyme catalyses Preferential cleavage of bonds with hydrophobic residues in P1'.. Naturally present in the silkworm intestine and allows the emerging moth to dissolve its cocoon. This chain is Serralysin, found in Serratia marcescens (strain ATCC 21074 / E-15).